The primary structure comprises 128 residues: Fluoride-specific ion channel FluC (128 aa).

4 consecutive transmembrane segments (helical) span residues 4–24, 37–57, 72–92, and 101–121; these read LLLV…VGVQ, TFIV…WLAL, VGVM…ALMI, and FTYT…GLLI. Residues Gly76 and Thr79 each contribute to the Na(+) site.

This sequence belongs to the fluoride channel Fluc/FEX (TC 1.A.43) family.

It localises to the cell inner membrane. It catalyses the reaction fluoride(in) = fluoride(out). Its activity is regulated as follows. Na(+) is not transported, but it plays an essential structural role and its presence is essential for fluoride channel function. Functionally, fluoride-specific ion channel. Important for reducing fluoride concentration in the cell, thus reducing its toxicity. The protein is Fluoride-specific ion channel FluC of Caulobacter sp. (strain K31).